A 149-amino-acid chain; its full sequence is Large ribosomal subunit protein bL9 (149 aa).

This sequence belongs to the bacterial ribosomal protein bL9 family.

In terms of biological role, binds to the 23S rRNA. The protein is Large ribosomal subunit protein bL9 of Dichelobacter nodosus (strain VCS1703A).